The chain runs to 113 residues: Dynein light chain Tctex-type 1 (113 aa).

Met1 carries the N-acetylmethionine modification. Residues Gln41–Ile113 form an interaction with GNB1 region.

The protein belongs to the dynein light chain Tctex-type family. As to quaternary structure, homodimer. The cytoplasmic dynein 1 complex consists of two catalytic heavy chains (HCs) and a number of non-catalytic subunits presented by intermediate chains (ICs), light intermediate chains (LICs) and light chains (LCs); the composition seems to vary in respect to the IC, LIC and LC composition. The heavy chain homodimer serves as a scaffold for the probable homodimeric assembly of the non-catalytic subunits. The ICs and LICs bind directly to the HC dimer and the LCs assemble on the IC dimer. DYNLT1 and DYNLT3 compete for association with dynein IC (DYNC1I1 or DYNC1I2). Self-associates. Interacts with RHO. Interacts with DYNC1I1 and DYNC1I2. Interacts with DOC2A, DOC2B and SCN10A. Interacts with PVR. Interacts with SVIL isoform 2. Interacts with GNB1; the interaction occurs in presence of guanine nucleotide-binding protein G(T) subunit gamma; the interaction diminishes the association of DYNLT1 with dynein IC (DYNC1I1 or DYNC1I2). Interacts with GNB2, GNB3 and GNB5; the interactions occur in presence of guanine nucleotide-binding protein G(T) subunit gamma. Interacts with ACVR2B and ARHGEF2. Interacts with DNAI4. Interacts with CFAP61. In terms of processing, phosphorylated by BMPR2. The phosphorylation status is proposed to regulate the association with the cytoplasmic dynein complex and may have role in cytoplasmic dynein cargo release.

Its subcellular location is the golgi apparatus. It is found in the cytoplasm. It localises to the cytoskeleton. The protein localises to the spindle. Acts as one of several non-catalytic accessory components of the cytoplasmic dynein 1 complex that are thought to be involved in linking dynein to cargos and to adapter proteins that regulate dynein function. Cytoplasmic dynein 1 acts as a motor for the intracellular retrograde motility of vesicles and organelles along microtubules. Binds to transport cargos and is involved in apical cargo transport such as rhodopsin-bearing vesicles in polarized epithelia. May also be a accessory component of axonemal dynein. In terms of biological role, plays a role in neuronal morphogenesis; the function is independent of cytoplasmic dynein and seems to be coupled to regulation of the actin cytoskeleton by enhancing Rac1 activity. The function in neurogenesis may be regulated by association with a G-protein beta-gamma dimer. May function as a receptor-independent activator of heterotrimeric G-protein signaling; the activation appears to be independent of a nucleotide exchange. Plays a role in regulating neurogenesis; inhibits the genesis of neurons from precursor cells during cortical development presumably by antagonizing ARHGEF2. Involved in the regulation of mitotic spindle orientation. Unrelated to the role in retrograde microtubule-associated movement may play a role in the dimerization of cytoplasmic proteins/domains such as for ACVR2B. Binds to the cytoplasmic domain of ACVR2B and, in vitro, inhibits ACVR2B signaling. This is Dynein light chain Tctex-type 1 (DYNLT1) from Bos taurus (Bovine).